The primary structure comprises 54 residues: UPF0391 membrane protein Mfla_0947/Mfla_1091 (54 aa).

2 consecutive transmembrane segments (helical) span residues 6 to 26 (VIFFVIALIAAFFGFSGIAAG) and 30 to 50 (IAKILFFVFLIITIVSLVAGI).

Belongs to the UPF0391 family.

It localises to the cell membrane. The polypeptide is UPF0391 membrane protein Mfla_0947/Mfla_1091 (Methylobacillus flagellatus (strain ATCC 51484 / DSM 6875 / VKM B-1610 / KT)).